The following is a 514-amino-acid chain: 2-isopropylmalate synthase (514 aa).

The region spanning 5-267 is the Pyruvate carboxyltransferase domain; it reads IYIFDTTLRD…HTDIVTEEIT (263 aa). Positions 14, 202, 204, and 238 each coordinate Mn(2+). The tract at residues 392-514 is regulatory domain; sequence KLKYYQVFTG…SKDLQKISAN (123 aa).

The protein belongs to the alpha-IPM synthase/homocitrate synthase family. LeuA type 1 subfamily. Homodimer. Mn(2+) is required as a cofactor.

It localises to the cytoplasm. The enzyme catalyses 3-methyl-2-oxobutanoate + acetyl-CoA + H2O = (2S)-2-isopropylmalate + CoA + H(+). It functions in the pathway amino-acid biosynthesis; L-leucine biosynthesis; L-leucine from 3-methyl-2-oxobutanoate: step 1/4. In terms of biological role, catalyzes the condensation of the acetyl group of acetyl-CoA with 3-methyl-2-oxobutanoate (2-ketoisovalerate) to form 3-carboxy-3-hydroxy-4-methylpentanoate (2-isopropylmalate). The chain is 2-isopropylmalate synthase from Clostridium kluyveri (strain NBRC 12016).